The primary structure comprises 340 residues: tRNA N6-adenosine threonylcarbamoyltransferase (340 aa).

Fe cation contacts are provided by histidine 113 and histidine 117. Residues 135–139, aspartate 169, glycine 182, aspartate 186, and asparagine 274 contribute to the substrate site; that span reads LVSGG. Aspartate 302 serves as a coordination point for Fe cation.

This sequence belongs to the KAE1 / TsaD family. It depends on Fe(2+) as a cofactor.

It localises to the cytoplasm. The catalysed reaction is L-threonylcarbamoyladenylate + adenosine(37) in tRNA = N(6)-L-threonylcarbamoyladenosine(37) in tRNA + AMP + H(+). Functionally, required for the formation of a threonylcarbamoyl group on adenosine at position 37 (t(6)A37) in tRNAs that read codons beginning with adenine. Is involved in the transfer of the threonylcarbamoyl moiety of threonylcarbamoyl-AMP (TC-AMP) to the N6 group of A37, together with TsaE and TsaB. TsaD likely plays a direct catalytic role in this reaction. This chain is tRNA N6-adenosine threonylcarbamoyltransferase, found in Mycolicibacterium gilvum (strain PYR-GCK) (Mycobacterium gilvum (strain PYR-GCK)).